The primary structure comprises 226 residues: Ribonuclease 3 (226 aa).

The region spanning isoleucine 6–asparagine 128 is the RNase III domain. Position 41 (glutamate 41) interacts with Mg(2+). Residue aspartate 45 is part of the active site. Residues asparagine 114 and glutamate 117 each contribute to the Mg(2+) site. The active site involves glutamate 117. The DRBM domain maps to aspartate 155 to isoleucine 225.

This sequence belongs to the ribonuclease III family. In terms of assembly, homodimer. Requires Mg(2+) as cofactor.

The protein resides in the cytoplasm. It carries out the reaction Endonucleolytic cleavage to 5'-phosphomonoester.. Its function is as follows. Digests double-stranded RNA. Involved in the processing of primary rRNA transcript to yield the immediate precursors to the large and small rRNAs (23S and 16S). Processes some mRNAs, and tRNAs when they are encoded in the rRNA operon. Processes pre-crRNA and tracrRNA of type II CRISPR loci if present in the organism. The sequence is that of Ribonuclease 3 from Buchnera aphidicola subsp. Baizongia pistaciae (strain Bp).